The following is a 229-amino-acid chain: UPF0173 metal-dependent hydrolase SH1218 (229 aa).

Belongs to the UPF0173 family.

The sequence is that of UPF0173 metal-dependent hydrolase SH1218 from Staphylococcus haemolyticus (strain JCSC1435).